A 187-amino-acid polypeptide reads, in one-letter code: Adenine phosphoribosyltransferase (187 aa).

133–137 (ATGGS) serves as a coordination point for AMP.

This sequence belongs to the purine/pyrimidine phosphoribosyltransferase family. Homodimer. It depends on Mg(2+) as a cofactor.

It is found in the cytoplasm. Its subcellular location is the nucleus. The catalysed reaction is AMP + diphosphate = 5-phospho-alpha-D-ribose 1-diphosphate + adenine. The protein operates within purine metabolism; AMP biosynthesis via salvage pathway; AMP from adenine: step 1/1. Its function is as follows. Catalyzes a salvage reaction resulting in the formation of AMP, that is energically less costly than de novo synthesis. This Kluyveromyces lactis (strain ATCC 8585 / CBS 2359 / DSM 70799 / NBRC 1267 / NRRL Y-1140 / WM37) (Yeast) protein is Adenine phosphoribosyltransferase (APT1).